Consider the following 68-residue polypeptide: Neuronal regeneration-related protein (68 aa).

In terms of assembly, interacts with FLNA. Interacts with the latency-associated peptides (LAP) of TGFB1 and TGFB2; the interaction results in a decrease in TGFB autoinduction. Phosphorylated on Ser-59. Phosphorylation decreases stability and activity.

Its subcellular location is the cytoplasm. Functionally, may have roles in neural function. Ectopic expression promotes axonal regeneration. Also augments motility of gliomas. May also have roles in cellular differentiation. Induces differentiation of fibroblast into myofibroblast and myofibroblast ameboid migration. Increases retinoic-acid regulation of lipid-droplet biogenesis. Down-regulates the expression of TGFB1 and TGFB2 but not of TGFB3. May play a role in the regulation of alveolar generation. The chain is Neuronal regeneration-related protein (Nrep) from Rattus norvegicus (Rat).